Consider the following 238-residue polypeptide: Accessory gene regulator A (238 aa).

Residues 2 to 125 (KIFICEDDPK…LRTRIIDCLE (124 aa)) form the Response regulatory domain. At Asp-59 the chain carries 4-aspartylphosphate. The HTH LytTR-type domain maps to 143–238 (IELKRGSNSV…YASVRNVKKI (96 aa)).

Its subcellular location is the cytoplasm. Functionally, required for high-level post-exponential phase expression of a series of secreted proteins. This Staphylococcus aureus (strain COL) protein is Accessory gene regulator A (agrA).